The following is a 245-amino-acid chain: MTSSSPARPPVAAASTPSDAKVALGWLHTAKFLTTAPELKHLPRLDVPEIAFVGRSNAGKSTCINTLTQQHRLAFASKTPGRTQSINLFSLGKQGVTDAVLADLPGYGYAAVPKEAKYRWQQVMGNYLQTRDNLKAVVLLCDPRLGLTELDEILLDVLRPRVEEGLKFLVLLTKSDKLNKTEAAKALSIVRLQAGGGDVKLFSSLKRKGVEEVAQHLWDWAHPPEKPAKKPKAEPAAEAATGDEG.

Positions 46-223 (DVPEIAFVGR…AQHLWDWAHP (178 aa)) constitute an EngB-type G domain. Residues 54 to 61 (GRSNAGKS), 81 to 85 (GRTQS), 103 to 106 (DLPG), 173 to 176 (TKSD), and 202 to 204 (FSS) contribute to the GTP site. Mg(2+) is bound by residues Ser61 and Thr83. The tract at residues 219–245 (DWAHPPEKPAKKPKAEPAAEAATGDEG) is disordered. The segment covering 222–235 (HPPEKPAKKPKAEP) has biased composition (basic and acidic residues). Residues 236–245 (AAEAATGDEG) show a composition bias toward low complexity.

It belongs to the TRAFAC class TrmE-Era-EngA-EngB-Septin-like GTPase superfamily. EngB GTPase family. Mg(2+) serves as cofactor.

Necessary for normal cell division and for the maintenance of normal septation. The chain is Probable GTP-binding protein EngB from Polaromonas sp. (strain JS666 / ATCC BAA-500).